The chain runs to 984 residues: Calsyntenin-1 (984 aa).

The N-terminal stretch at 1 to 18 (MRTAYFIFVGALLGVSYA) is a signal peptide. The Extracellular segment spans residues 19 to 850 (KHHHAARAPI…VGQGAIAGGA (832 aa)). Cadherin domains lie at 66–142 (YLLT…APEI) and 143–257 (ENPW…APGV). 2 N-linked (GlcNAc...) asparagine glycosylation sites follow: asparagine 206 and asparagine 305. Residues 851–871 (VAVVVVVCVGFLLVLLVIGVL) traverse the membrane as a helical segment. Over 872–984 (KMRDTPMPRR…ISTNARSYRV (113 aa)) the chain is Cytoplasmic. The interval 878–959 (MPRRRRQKRQ…QTEVLPHLDA (82 aa)) is disordered. The span at 886–896 (RQSDGGMHWDD) shows a compositional bias: basic and acidic residues. Positions 918–951 (EFSDEEEEEETDGESECSYRDEEDDVSEDEEDQT) are enriched in acidic residues.

The protein belongs to the calsyntenin family. In terms of assembly, interacts with isoform c of daf-2 (daf-2c); promoting daf-2c localization to synaptic regions. Interacts with klc-2. Interacts with unc-104. In terms of processing, a proportion of the protein is proteolytically cleaved before the transmembrane domain in neurons, leading to release in the extracellular space. Widely expressed in the nervous system. Highly expressed in many head neurons, including most amphid sensory neurons. Also expressed in other tissues, such as intestine and gonadal sheath cells.

It is found in the golgi apparatus membrane. The protein localises to the perikaryon. Its subcellular location is the cell projection. The protein resides in the axon. It localises to the secreted. It is found in the synaptic cleft. Cell adhesion molecule involved in associative learning and memory. Acts as a regulator of GABAergic synaptic transmission at neuromuscular junctions by regulating GABA synaptic vesicle precursor transport: possibly functions as a cargo adapter for unc-104-mediated transport of synaptic vesicle precursors. Promotes localization of isoform c of daf-2 (daf-2c) to synaptic regions by acting as a signaling adapter between klc-2 and daf-2c. Its function is as follows. Acts as aregulator of glutamate signaling in the sensory neurons by inhibiting the activity of command interneurons, thereby negatively regulating motor circuit activity and locomotion. The sequence is that of Calsyntenin-1 from Caenorhabditis elegans.